Here is a 596-residue protein sequence, read N- to C-terminus: MRTCYTGQVCRDHLGQTVTLYGWVNRRRDHGGVIFIDLRDRTGLAQIVFDPDNAGAFGTAERLRNEFCVRVTGLVRERPQGTTNAELASGEVEVLCRDVEILNPSVTPPFQLDDDNLSETTRLTHRVLDLRRPQMQRNLMLRYRVSIEVRKFLDQLGFIDIETPMLTKSTPEGARDYLVPSRVNAGHFFALPQSPQLFKQMLMVSGFDRYYQITKCFRDEDLRADRQPEFTQIDCETSFLTETEIRAVFESMIRHVFKVVQNVDLPDPFPIMTWTEAMARFGSDKPDMRVNLEFTDVADIMRDVDFKVFASAATTQGSRVVALRVPGGGELSRSEIDAYTQFVGIYGAKGLAYIKVNDVAKGREGLQSPIVKNLHDAALAELVKRTGAQDGDIIFFGADRAKVVNDALGALRVKIGHSEFGKKTGLFSGGWRPLWVVDFPMFEYDEEEGRYTAAHHPFTSPKDGHEDFLETDPSQAFAKAYDMVLNGWEIGGGSVRIHREEVQSKVFRALKIGPDEAREKFGFLLDALQYGAPPHGGIAFGLDRIVTMMTGADSIRDVIAFPKTQRAQDLLTQAPSSVDDKQLRELHIRLRNTEVK.

Glutamate 172 is a binding site for L-aspartate. The segment at 196-199 (QLFK) is aspartate. Arginine 218 provides a ligand contact to L-aspartate. ATP-binding positions include 218 to 220 (RDE) and glutamine 227. Histidine 455 serves as a coordination point for L-aspartate. Glutamate 489 is an ATP binding site. Residue arginine 496 coordinates L-aspartate. 541–544 (GLDR) is an ATP binding site.

This sequence belongs to the class-II aminoacyl-tRNA synthetase family. Type 1 subfamily. Homodimer.

The protein localises to the cytoplasm. The catalysed reaction is tRNA(Asx) + L-aspartate + ATP = L-aspartyl-tRNA(Asx) + AMP + diphosphate. In terms of biological role, aspartyl-tRNA synthetase with relaxed tRNA specificity since it is able to aspartylate not only its cognate tRNA(Asp) but also tRNA(Asn). Reaction proceeds in two steps: L-aspartate is first activated by ATP to form Asp-AMP and then transferred to the acceptor end of tRNA(Asp/Asn). The chain is Aspartate--tRNA(Asp/Asn) ligase from Bordetella avium (strain 197N).